A 241-amino-acid polypeptide reads, in one-letter code: Carboxy-S-adenosyl-L-methionine synthase 1 (241 aa).

Residues Tyr37, 61–63, Asn131, and Arg198 contribute to the S-adenosyl-L-methionine site; that span reads GCS.

This sequence belongs to the class I-like SAM-binding methyltransferase superfamily. Cx-SAM synthase family. In terms of assembly, homodimer.

The enzyme catalyses prephenate + S-adenosyl-L-methionine = carboxy-S-adenosyl-L-methionine + 3-phenylpyruvate + H2O. Catalyzes the conversion of S-adenosyl-L-methionine (SAM) to carboxy-S-adenosyl-L-methionine (Cx-SAM). In Yersinia pseudotuberculosis serotype IB (strain PB1/+), this protein is Carboxy-S-adenosyl-L-methionine synthase 1.